The chain runs to 315 residues: Methionyl-tRNA formyltransferase (315 aa).

109–112 (SLLP) contributes to the (6S)-5,6,7,8-tetrahydrofolate binding site.

Belongs to the Fmt family.

The enzyme catalyses L-methionyl-tRNA(fMet) + (6R)-10-formyltetrahydrofolate = N-formyl-L-methionyl-tRNA(fMet) + (6S)-5,6,7,8-tetrahydrofolate + H(+). Functionally, attaches a formyl group to the free amino group of methionyl-tRNA(fMet). The formyl group appears to play a dual role in the initiator identity of N-formylmethionyl-tRNA by promoting its recognition by IF2 and preventing the misappropriation of this tRNA by the elongation apparatus. The protein is Methionyl-tRNA formyltransferase of Lachnospira eligens (strain ATCC 27750 / DSM 3376 / VPI C15-48 / C15-B4) (Eubacterium eligens).